A 214-amino-acid polypeptide reads, in one-letter code: Outer-membrane lipoprotein LolB (214 aa).

Positions 1-25 (MNNLKRFTESIFSCIALSTLLFLGG) are cleaved as a signal peptide. Cys26 carries N-palmitoyl cysteine lipidation. A lipid anchor (S-diacylglycerol cysteine) is attached at Cys26.

This sequence belongs to the LolB family. Monomer.

Its subcellular location is the cell outer membrane. Functionally, plays a critical role in the incorporation of lipoproteins in the outer membrane after they are released by the LolA protein. In Shewanella putrefaciens (strain CN-32 / ATCC BAA-453), this protein is Outer-membrane lipoprotein LolB.